The chain runs to 610 residues: UvrABC system protein C (610 aa).

Positions 13-91 constitute a GIY-YIG domain; the sequence is HLPGVYRMYD…IKENQPKYNV (79 aa). The region spanning 201–236 is the UVR domain; the sequence is GQVVEHLVQKMENAAQELDFEAAARFRDQIQSVRAV.

The protein belongs to the UvrC family. In terms of assembly, interacts with UvrB in an incision complex.

The protein resides in the cytoplasm. In terms of biological role, the UvrABC repair system catalyzes the recognition and processing of DNA lesions. UvrC both incises the 5' and 3' sides of the lesion. The N-terminal half is responsible for the 3' incision and the C-terminal half is responsible for the 5' incision. In Actinobacillus pleuropneumoniae serotype 5b (strain L20), this protein is UvrABC system protein C.